The sequence spans 91 residues: Small ribosomal subunit protein bS20 (91 aa).

The span at 1–21 shows a compositional bias: basic and acidic residues; it reads MPLHKSAEKRLRQSARRNERN. Disordered stretches follow at residues 1–25 and 71–91; these read MPLHKSAEKRLRQSARRNERNRARK and NKASRKKSQLSRMLNAYAQKD.

This sequence belongs to the bacterial ribosomal protein bS20 family.

Binds directly to 16S ribosomal RNA. This chain is Small ribosomal subunit protein bS20, found in Prosthecochloris aestuarii (strain DSM 271 / SK 413).